Here is a 205-residue protein sequence, read N- to C-terminus: Dephospho-CoA kinase (205 aa).

The DPCK domain occupies valine 4 to glutamine 204. Alanine 12–threonine 17 contributes to the ATP binding site.

The protein belongs to the CoaE family.

It localises to the cytoplasm. The catalysed reaction is 3'-dephospho-CoA + ATP = ADP + CoA + H(+). It participates in cofactor biosynthesis; coenzyme A biosynthesis; CoA from (R)-pantothenate: step 5/5. Its function is as follows. Catalyzes the phosphorylation of the 3'-hydroxyl group of dephosphocoenzyme A to form coenzyme A. This Haemophilus ducreyi (strain 35000HP / ATCC 700724) protein is Dephospho-CoA kinase.